A 378-amino-acid polypeptide reads, in one-letter code: Palmitoyltransferase PFA4 (378 aa).

The Cytoplasmic segment spans residues 1–9 (MPVKLRWPW). Residues 10 to 30 (LGIAIPTFLISFIGYGAHYFI) form a helical membrane-spanning segment. Over 31 to 40 (LSNFLSVPKQ) the chain is Lumenal. Residues 41–61 (ITFEFCLSMIWLSYYLAICTN) form a helical membrane-spanning segment. Over 62–119 (PGRPLPNYKPPPDIWRNFCKKCQSYKPERSHHCKTCNQCVLMMDHHCPWTMNCVGFAN) the chain is Cytoplasmic. The region spanning 78–128 (NFCKKCQSYKPERSHHCKTCNQCVLMMDHHCPWTMNCVGFANYPHFLRFLF) is the DHHC domain. Cys108 (S-palmitoyl cysteine intermediate) is an active-site residue. The chain crosses the membrane as a helical span at residues 120–140 (YPHFLRFLFWIIVTTSVLFCI). Over 141 to 164 (QAKRIYFIWQQRHLPGYFFKKSEL) the chain is Lumenal. Residues 165-185 (IFLTISSPLNSFVLLTITILF) traverse the membrane as a helical segment. Residues 186–378 (LRCLFNQILN…DDFGVDVDME (193 aa)) lie on the Cytoplasmic side of the membrane.

Belongs to the DHHC palmitoyltransferase family. PFA4 subfamily. In terms of processing, autopalmitoylated.

It is found in the endoplasmic reticulum membrane. It carries out the reaction L-cysteinyl-[protein] + hexadecanoyl-CoA = S-hexadecanoyl-L-cysteinyl-[protein] + CoA. Mediates the reversible addition of palmitate to target proteins, thereby regulating their membrane association and biological function. Palmitoylates several amino acid permeases. Palmitoylates chitin synthase CHS3, which is required for its proper export from the ER. Can palmitoylate RAS2 in vitro. The polypeptide is Palmitoyltransferase PFA4 (Saccharomyces cerevisiae (strain ATCC 204508 / S288c) (Baker's yeast)).